The sequence spans 134 residues: Profilin-4 (134 aa).

Cys13 and Cys118 are oxidised to a cystine. Positions 84 to 100 (AVIRGKKGSGGITIKKT) match the Involved in PIP2 interaction motif. Thr114 bears the Phosphothreonine mark.

Belongs to the profilin family. As to quaternary structure, occurs in many kinds of cells as a complex with monomeric actin in a 1:1 ratio. Phosphorylated by MAP kinases.

The protein resides in the cytoplasm. Its subcellular location is the cytoskeleton. Its function is as follows. Binds to actin and affects the structure of the cytoskeleton. At high concentrations, profilin prevents the polymerization of actin, whereas it enhances it at low concentrations. The protein is Profilin-4 of Olea europaea (Common olive).